The primary structure comprises 361 residues: tRNA-specific 2-thiouridylase MnmA (361 aa).

Residues 8–15 and Met35 each bind ATP; that span reads AMSGGVDS. The interaction with target base in tRNA stretch occupies residues 95-97; it reads NPD. Cys100 serves as the catalytic Nucleophile. Residues Cys100 and Cys196 are joined by a disulfide bond. Gly124 serves as a coordination point for ATP. The tract at residues 146-148 is interaction with tRNA; it reads KDQ. The active-site Cysteine persulfide intermediate is the Cys196. The interval 303–304 is interaction with tRNA; it reads RY.

Belongs to the MnmA/TRMU family.

The protein localises to the cytoplasm. It carries out the reaction S-sulfanyl-L-cysteinyl-[protein] + uridine(34) in tRNA + AH2 + ATP = 2-thiouridine(34) in tRNA + L-cysteinyl-[protein] + A + AMP + diphosphate + H(+). Catalyzes the 2-thiolation of uridine at the wobble position (U34) of tRNA, leading to the formation of s(2)U34. The polypeptide is tRNA-specific 2-thiouridylase MnmA (Chlamydia pneumoniae (Chlamydophila pneumoniae)).